The following is a 348-amino-acid chain: Propane 2-monooxygenase, reductase component (348 aa).

A 2Fe-2S ferredoxin-type domain is found at 5 to 95 (HKINFDPVDI…DCTIELLNFD (91 aa)). Residues cysteine 39, cysteine 44, cysteine 47, and cysteine 79 each coordinate [2Fe-2S] cluster. Residues 105 to 206 (IQDVRTQVQA…TGPYGSFTLK (102 aa)) form the FAD-binding FR-type domain.

It belongs to the bacterial ring-hydroxylating dioxygenase ferredoxin reductase family. The propane 2-monooxygenase multicomponent enzyme system is composed of an electron transfer component and a monooxygenase component interacting with the effector protein MimD. The electron transfer component is composed of a reductase (MimB), and the monooxygenase component is formed by a large subunit (MimA) and a small subunit (MimC). The cofactor is FAD. Requires [2Fe-2S] cluster as cofactor.

Its function is as follows. Reductase component of the propane 2-monooxygenase multicomponent enzyme system which is involved in the degradation of propane via the O2-dependent hydroxylation of propane. Reductase catalyzes the transfer of electrons from NADH or NADPH to monooxygenase. This chain is Propane 2-monooxygenase, reductase component, found in Mycolicibacterium smegmatis (strain ATCC 700084 / mc(2)155) (Mycobacterium smegmatis).